Here is a 460-residue protein sequence, read N- to C-terminus: Cation efflux system protein CusC (460 aa).

The first 17 residues, 1 to 17, serve as a signal peptide directing secretion; that stretch reads MSPCKLLPFCVALALTG. Cys-18 carries the N-palmitoyl cysteine lipid modification. Cys-18 carries the S-diacylglycerol cysteine lipid modification.

It belongs to the outer membrane factor (OMF) (TC 1.B.17) family. Homotrimer. Component of the cus efflux system composed of CusA, CusB, CusC and CusF.

Its subcellular location is the cell outer membrane. Its function is as follows. Forms pores that allow passive diffusion of cations across the outer membrane. Part of a cation efflux system that mediates resistance to copper and silver. The chain is Cation efflux system protein CusC (cusC) from Escherichia coli O6:H1 (strain CFT073 / ATCC 700928 / UPEC).